The chain runs to 423 residues: Protein CLP1 homolog (423 aa).

ATP-binding positions include glutamate 16, lysine 57, and 119–124 (DVGKST).

The protein belongs to the Clp1 family. Clp1 subfamily.

It is found in the nucleus. Its function is as follows. Required for endonucleolytic cleavage during polyadenylation-dependent pre-mRNA 3'-end formation. This chain is Protein CLP1 homolog (cbc), found in Drosophila yakuba (Fruit fly).